We begin with the raw amino-acid sequence, 196 residues long: Small ribosomal subunit protein uS4c (196 aa).

Residues 89-150 form the S4 RNA-binding domain; the sequence is MRLDNIVFRL…NQRSKRLVQN (62 aa).

The protein belongs to the universal ribosomal protein uS4 family. In terms of assembly, part of the 30S ribosomal subunit. Contacts protein S5. The interaction surface between S4 and S5 is involved in control of translational fidelity.

It localises to the plastid. It is found in the chloroplast. In terms of biological role, one of the primary rRNA binding proteins, it binds directly to 16S rRNA where it nucleates assembly of the body of the 30S subunit. Functionally, with S5 and S12 plays an important role in translational accuracy. This is Small ribosomal subunit protein uS4c (rps4) from Eleusine indica (Goosegrass).